The primary structure comprises 177 residues: Peptide methionine sulfoxide reductase MsrA (177 aa).

Residue cysteine 14 is part of the active site.

This sequence belongs to the MsrA Met sulfoxide reductase family.

It carries out the reaction L-methionyl-[protein] + [thioredoxin]-disulfide + H2O = L-methionyl-(S)-S-oxide-[protein] + [thioredoxin]-dithiol. It catalyses the reaction [thioredoxin]-disulfide + L-methionine + H2O = L-methionine (S)-S-oxide + [thioredoxin]-dithiol. Its function is as follows. Has an important function as a repair enzyme for proteins that have been inactivated by oxidation. Catalyzes the reversible oxidation-reduction of methionine sulfoxide in proteins to methionine. In Bacillus velezensis (strain DSM 23117 / BGSC 10A6 / LMG 26770 / FZB42) (Bacillus amyloliquefaciens subsp. plantarum), this protein is Peptide methionine sulfoxide reductase MsrA.